The primary structure comprises 480 residues: Altronate oxidoreductase (480 aa).

19–30 (ILQFGEGNFLRG) provides a ligand contact to NAD(+).

Belongs to the mannitol dehydrogenase family. UxaB subfamily.

The enzyme catalyses D-altronate + NAD(+) = keto-D-tagaturonate + NADH + H(+). The protein operates within carbohydrate metabolism; pentose and glucuronate interconversion. The polypeptide is Altronate oxidoreductase (Bacillus subtilis (strain 168)).